Consider the following 57-residue polypeptide: Granulin-3 (57 aa).

2 disulfides stabilise this stretch: Cys4/Cys16 and Cys10/Cys26.

Belongs to the granulin family. Post-translationally, granulins are disulfide bridged. Ubiquitous.

Its subcellular location is the secreted. In terms of biological role, granulins have possible cytokine-like activity. They may play a role in inflammation, wound repair, and tissue remodeling. The chain is Granulin-3 from Cyprinus carpio (Common carp).